The following is a 253-amino-acid chain: Ubiquinone biosynthesis O-methyltransferase (253 aa).

S-adenosyl-L-methionine is bound by residues arginine 41, glycine 72, aspartate 93, and methionine 136.

It belongs to the methyltransferase superfamily. UbiG/COQ3 family.

It catalyses the reaction a 3-demethylubiquinol + S-adenosyl-L-methionine = a ubiquinol + S-adenosyl-L-homocysteine + H(+). The enzyme catalyses a 3-(all-trans-polyprenyl)benzene-1,2-diol + S-adenosyl-L-methionine = a 2-methoxy-6-(all-trans-polyprenyl)phenol + S-adenosyl-L-homocysteine + H(+). It participates in cofactor biosynthesis; ubiquinone biosynthesis. O-methyltransferase that catalyzes the 2 O-methylation steps in the ubiquinone biosynthetic pathway. The sequence is that of Ubiquinone biosynthesis O-methyltransferase from Chelativorans sp. (strain BNC1).